The following is a 372-amino-acid chain: Anhydro-N-acetylmuramic acid kinase (372 aa).

Residue glycine 14–aspartate 21 coordinates ATP.

It belongs to the anhydro-N-acetylmuramic acid kinase family.

The catalysed reaction is 1,6-anhydro-N-acetyl-beta-muramate + ATP + H2O = N-acetyl-D-muramate 6-phosphate + ADP + H(+). The protein operates within amino-sugar metabolism; 1,6-anhydro-N-acetylmuramate degradation. Its pathway is cell wall biogenesis; peptidoglycan recycling. Catalyzes the specific phosphorylation of 1,6-anhydro-N-acetylmuramic acid (anhMurNAc) with the simultaneous cleavage of the 1,6-anhydro ring, generating MurNAc-6-P. Is required for the utilization of anhMurNAc either imported from the medium or derived from its own cell wall murein, and thus plays a role in cell wall recycling. This Photorhabdus laumondii subsp. laumondii (strain DSM 15139 / CIP 105565 / TT01) (Photorhabdus luminescens subsp. laumondii) protein is Anhydro-N-acetylmuramic acid kinase.